A 392-amino-acid polypeptide reads, in one-letter code: MGALRRWLPCCCCCCRGGGGGGGGGSVGDGLVWDVALKAHASGDYSVAVAQANEALEDQAQVFVSPAATLVGVYDGHGGPEAARFVNKRLFSLIQEFAAQSGGISAEVLEKAFGETEEEFVASVQRSWPSQPRILSVGSCCLVGAIEDGTLYVANLGDSRAVLGRRSAAGAAHGRKGKNRVVPERLSRDHNVADEDVRRELKELHPDDSHIVLNTHGVWRIKGIIQVSRSIGDVYLKKPEICKSNPMLQQTICPFPLRRPVMSAVPTIKTRKLRPGDQFVIFASDGLWEQLTDEAAVAIVAGSPRRGVAMRLVRAAQLEAARKKDVKYERIRTIEKGQRRHFHDDITVVVLFLDKCRGKAGRGDEIDGTDGPVDVFSLSPDDREDPTRPVLR.

Residues D44–L353 enclose the PPM-type phosphatase domain. Mn(2+) contacts are provided by D75, G76, D285, and D344. A disordered region spans residues A360–R392.

Belongs to the PP2C family. The cofactor is Mg(2+). Requires Mn(2+) as cofactor.

The catalysed reaction is O-phospho-L-seryl-[protein] + H2O = L-seryl-[protein] + phosphate. It carries out the reaction O-phospho-L-threonyl-[protein] + H2O = L-threonyl-[protein] + phosphate. The sequence is that of Probable protein phosphatase 2C 29 from Oryza sativa subsp. japonica (Rice).